A 512-amino-acid polypeptide reads, in one-letter code: Delta(14)-sterol reductase (512 aa).

8 helical membrane-spanning segments follow: residues 27-47, 100-120, 140-160, 172-192, 242-262, 278-298, 324-344, and 353-373; these read IGAS…GFLC, AVLG…LLPA, ACLS…VRGP, YIQL…YVYL, SFME…AFAA, WTPL…VIIS, FGFM…SIQA, and ALGP…YYIF. NADP(+)-binding positions include Lys380, Arg384, Leu407, Trp412, and 419–420; that span reads NY. 2 consecutive transmembrane segments (helical) span residues 418–438 and 458–478; these read INYL…LAAG and MKGA…ILLI. Residues Asp484, 488-492, and Tyr499 contribute to the NADP(+) site; that span reads CRRKY.

Belongs to the ERG4/ERG24 family.

The protein resides in the membrane. It carries out the reaction 4,4-dimethyl-5alpha-cholesta-8,24-dien-3beta-ol + NADP(+) = 4,4-dimethyl-5alpha-cholesta-8,14,24-trien-3beta-ol + NADPH + H(+). It participates in steroid biosynthesis; zymosterol biosynthesis; zymosterol from lanosterol: step 2/6. Reduces the C14=C15 double bond of 4,4-dimethyl-cholesta-8,14,24-trienol to produce 4,4-dimethyl-cholesta-8,24-dienol. The sequence is that of Delta(14)-sterol reductase (ERG3) from Septoria lycopersici (Tomato leaf spot fungus).